The primary structure comprises 230 residues: MSAMNIAVLVPVKKLDKAKMRMADTLDRSQRRQLMMVTLRRVLSALQKAQIGDVYLVASDPQVKNIACDLCVKFIPDQGDELNPSLELARGELCQNYDALLVVFGDLPMISDKDIKTIVRLGSSKPSCVIAPDKRNVGTNVLFLHPPYLLPFTFGGNSYERFRSNCEKLGVQFLVYQSQNTALDLDYPQDILDLAALRGHKISGLEEILDPGVLAQISQVTSMSGAKMGA.

The phosphoenolpyruvate site is built by threonine 139, glycine 155, and serine 158.

Belongs to the CofC family.

The catalysed reaction is phosphoenolpyruvate + GTP + H(+) = enolpyruvoyl-2-diphospho-5'-guanosine + diphosphate. Its pathway is cofactor biosynthesis; coenzyme F420 biosynthesis. Functionally, guanylyltransferase that catalyzes the activation of phosphoenolpyruvate (PEP) as enolpyruvoyl-2-diphospho-5'-guanosine, via the condensation of PEP with GTP. It is involved in the biosynthesis of coenzyme F420, a hydride carrier cofactor. The polypeptide is Phosphoenolpyruvate guanylyltransferase (Thermobaculum terrenum (strain ATCC BAA-798 / CCMEE 7001 / YNP1)).